The following is an 853-amino-acid chain: E3 ubiquitin-protein ligase RNF216 (853 aa).

3 disordered regions span residues 33–102 (TISD…DDIV), 125–152 (PLEVQNQSSEDSETELLSNPGEPAASVD), and 165–228 (PYFQ…AHPL). Residues 53 to 73 (QQEDDLDDDVILTEDDSEDEY) show a composition bias toward acidic residues. Lys89 participates in a covalent cross-link: Glycyl lysine isopeptide (Lys-Gly) (interchain with G-Cter in SUMO2). Residues Lys339 and Lys342 each participate in a glycyl lysine isopeptide (Lys-Gly) (interchain with G-Cter in SUMO2) cross-link. Residue Ser407 is modified to Phosphoserine. Residues Lys413, Lys418, Lys436, Lys447, and Lys473 each participate in a glycyl lysine isopeptide (Lys-Gly) (interchain with G-Cter in SUMO2) cross-link. A coiled-coil region spans residues 463–479 (VKQEQEFYEQKIKEMAE). The TRIAD supradomain stretch occupies residues 499 to 716 (QLIECRCCYG…SPGAPCQECS (218 aa)). Positions 503, 506, 525, 528, 593, and 596 each coordinate Zn(2+). An RING-type 1 zinc finger spans residues 503–552 (CRCCYGEFPFEELTQCADAHLFCKECLIRYAQEAVFGSGKSELSCMEGSC). An IBR-type zinc finger spans residues 571–636 (YKYYERKAEE…LWKEHNGLTC (66 aa)). Lys607 participates in a covalent cross-link: Glycyl lysine isopeptide (Lys-Gly) (interchain with G-Cter in SUMO2). Residues Cys611, Cys616, Cys621, Cys624, His631, and Cys636 each contribute to the Zn(2+) site. Residues Lys646 and Lys654 each participate in a glycyl lysine isopeptide (Lys-Gly) (interchain with G-Cter in SUMO2) cross-link. Residues Cys663 and Cys666 each coordinate Zn(2+). The RING-type 2; atypical zinc finger occupies 663–691 (CHKCGTGLIKSEGCNRMSCRCGAQMCYLC). The active site involves Cys676. The Zn(2+) site is built by Cys681, Cys683, Cys688, Cys691, His704, and Cys712. A coiled-coil region spans residues 725–751 (TEDDEKLIEEIQKEAEEEQKRKNGENT). Glycyl lysine isopeptide (Lys-Gly) (interchain with G-Cter in SUMO2) cross-links involve residues Lys753 and Lys761.

As to quaternary structure, interacts with UBE2L3 and to some extent with UBE2L6. Interacts with TRAF3, TLR3, TLR4, TLR5 and TLR9. Isoform 3/ZIN binds RIPK1. Auto-ubiquitinated. In terms of processing, phosphorylation at Ser-719 enhances acceptor ubiquitin binding and chain-type specificity towards 'Lys-63' di-ubiquitin but not di-ubiquitin with other linkage types.

The protein localises to the cytoplasm. It localises to the cytoplasmic vesicle. It is found in the clathrin-coated vesicle. The catalysed reaction is S-ubiquitinyl-[E2 ubiquitin-conjugating enzyme]-L-cysteine + [acceptor protein]-L-lysine = [E2 ubiquitin-conjugating enzyme]-L-cysteine + N(6)-ubiquitinyl-[acceptor protein]-L-lysine.. It participates in protein modification; protein ubiquitination. With respect to regulation, allosterically activated by 'Lys-63'-linked di-ubiquitin. In terms of biological role, E3 ubiquitin ligase which accepts ubiquitin from specific E2 ubiquitin-conjugating enzymes, and then transfers it to substrates promoting their ubiquitination. Plays a role in the regulation of antiviral responses by promoting the degradation of TRAF3, TLR4 and TLR9. In turn, down-regulates NF-kappa-B and IRF3 activation as well as beta interferon production. Also participates in the regulation of autophagy by ubiquitinating BECN1 leading to its degradation and autophagy inhibition. Plays a role in ARC-dependent synaptic plasticity by mediating ARC ubiquitination resulting in its rapid proteasomal degradation. Plays aso an essential role in spermatogenesis and male fertility. Mechanistically, regulates meiosis by promoting the degradation of PRKACB through the ubiquitin-mediated lysosome pathway. Modulates the gonadotropin-releasing hormone signal pathway by affecting the stability of STAU2 that is required for the microtubule-dependent transport of neuronal RNA from the cell body to the dendrite. The sequence is that of E3 ubiquitin-protein ligase RNF216 (Rnf216) from Mus musculus (Mouse).